Reading from the N-terminus, the 478-residue chain is Protein nucleotidyltransferase YdiU (478 aa).

ATP is bound by residues Gly84, Gly86, Arg87, Lys107, Asp119, Gly120, Arg170, and Arg177. Asp246 acts as the Proton acceptor in catalysis. The Mg(2+) site is built by Asn247 and Asp256. Asp256 serves as a coordination point for ATP.

Belongs to the SELO family. It depends on Mg(2+) as a cofactor. The cofactor is Mn(2+).

The enzyme catalyses L-seryl-[protein] + ATP = 3-O-(5'-adenylyl)-L-seryl-[protein] + diphosphate. The catalysed reaction is L-threonyl-[protein] + ATP = 3-O-(5'-adenylyl)-L-threonyl-[protein] + diphosphate. It carries out the reaction L-tyrosyl-[protein] + ATP = O-(5'-adenylyl)-L-tyrosyl-[protein] + diphosphate. It catalyses the reaction L-histidyl-[protein] + UTP = N(tele)-(5'-uridylyl)-L-histidyl-[protein] + diphosphate. The enzyme catalyses L-seryl-[protein] + UTP = O-(5'-uridylyl)-L-seryl-[protein] + diphosphate. The catalysed reaction is L-tyrosyl-[protein] + UTP = O-(5'-uridylyl)-L-tyrosyl-[protein] + diphosphate. Its function is as follows. Nucleotidyltransferase involved in the post-translational modification of proteins. It can catalyze the addition of adenosine monophosphate (AMP) or uridine monophosphate (UMP) to a protein, resulting in modifications known as AMPylation and UMPylation. The chain is Protein nucleotidyltransferase YdiU from Escherichia coli O1:K1 / APEC.